The chain runs to 281 residues: 4-diphosphocytidyl-2-C-methyl-D-erythritol kinase (281 aa).

The active site involves K11. 95-105 (PVAAGLGGGSS) contacts ATP. D137 is an active-site residue.

This sequence belongs to the GHMP kinase family. IspE subfamily.

It carries out the reaction 4-CDP-2-C-methyl-D-erythritol + ATP = 4-CDP-2-C-methyl-D-erythritol 2-phosphate + ADP + H(+). Its pathway is isoprenoid biosynthesis; isopentenyl diphosphate biosynthesis via DXP pathway; isopentenyl diphosphate from 1-deoxy-D-xylulose 5-phosphate: step 3/6. In terms of biological role, catalyzes the phosphorylation of the position 2 hydroxy group of 4-diphosphocytidyl-2C-methyl-D-erythritol. The sequence is that of 4-diphosphocytidyl-2-C-methyl-D-erythritol kinase from Geobacter metallireducens (strain ATCC 53774 / DSM 7210 / GS-15).